Consider the following 334-residue polypeptide: Aspartate carbamoyltransferase catalytic subunit (334 aa).

2 residues coordinate carbamoyl phosphate: Arg-71 and Thr-72. Lys-99 is an L-aspartate binding site. Carbamoyl phosphate-binding residues include Arg-121, His-151, and Gln-154. Residues Arg-184 and Arg-239 each coordinate L-aspartate. Carbamoyl phosphate-binding residues include Gly-280 and Pro-281.

The protein belongs to the aspartate/ornithine carbamoyltransferase superfamily. ATCase family. In terms of assembly, heterododecamer (2C3:3R2) of six catalytic PyrB chains organized as two trimers (C3), and six regulatory PyrI chains organized as three dimers (R2).

The enzyme catalyses carbamoyl phosphate + L-aspartate = N-carbamoyl-L-aspartate + phosphate + H(+). The protein operates within pyrimidine metabolism; UMP biosynthesis via de novo pathway; (S)-dihydroorotate from bicarbonate: step 2/3. Functionally, catalyzes the condensation of carbamoyl phosphate and aspartate to form carbamoyl aspartate and inorganic phosphate, the committed step in the de novo pyrimidine nucleotide biosynthesis pathway. The polypeptide is Aspartate carbamoyltransferase catalytic subunit (Pseudomonas putida (strain ATCC 47054 / DSM 6125 / CFBP 8728 / NCIMB 11950 / KT2440)).